The primary structure comprises 594 residues: UvrABC system protein C (594 aa).

One can recognise a GIY-YIG domain in the interval 14–91; it reads DQPGCYLMKD…IKKHDPKYNI (78 aa). A UVR domain is found at 196–231; sequence KEVRSELETKMYEASEKLEFERAKELRDQIAHIDAI.

It belongs to the UvrC family. In terms of assembly, interacts with UvrB in an incision complex.

Its subcellular location is the cytoplasm. Its function is as follows. The UvrABC repair system catalyzes the recognition and processing of DNA lesions. UvrC both incises the 5' and 3' sides of the lesion. The N-terminal half is responsible for the 3' incision and the C-terminal half is responsible for the 5' incision. In Bacillus anthracis (strain A0248), this protein is UvrABC system protein C.